A 56-amino-acid polypeptide reads, in one-letter code: Ovomucoid (56 aa).

Residues 6–56 (VDCSEYPKPACTLEHRPLCGSDNKTYGNKCNFCNAVVESNGTLTLSHFGKC) form the Kazal-like domain. Intrachain disulfides connect cysteine 8–cysteine 38, cysteine 16–cysteine 35, and cysteine 24–cysteine 56. N-linked (GlcNAc...) asparagine glycosylation occurs at asparagine 45.

The protein resides in the secreted. This Pavo cristatus (Indian peafowl) protein is Ovomucoid.